A 301-amino-acid polypeptide reads, in one-letter code: Fatty acid elongase 3 (301 aa).

Transmembrane regions (helical) follow at residues 31 to 51 (VPYI…KSIM), 64 to 84 (IVWN…TVPY), 122 to 142 (ALAD…LFAL), 161 to 181 (VIFL…FAYV), 187 to 207 (GLWF…YYFV), 219 to 239 (FAPI…IVVC), and 257 to 277 (FSLH…SQLF). The short motif at 165–169 (HWYHH) is the HxxHH motif element. Catalysis depends on His-168, which acts as the Nucleophile.

The protein belongs to the ELO family.

Its subcellular location is the endoplasmic reticulum membrane. It catalyses the reaction an acyl-CoA + malonyl-CoA + H(+) = a 3-oxoacyl-CoA + CO2 + CoA. Its pathway is lipid metabolism; fatty acid biosynthesis. Involved in the synthesis of fatty acids. Elongates C14 fatty acids to C18. The sequence is that of Fatty acid elongase 3 from Trypanosoma brucei brucei (strain 927/4 GUTat10.1).